The chain runs to 91 residues: Cell division protein CrgA (91 aa).

Polar residues predominate over residues 1–24; sequence MPKSKITTEGSALPQSSSSATNRT. The disordered stretch occupies residues 1 to 28; it reads MPKSKITTEGSALPQSSSSATNRTPVKI. The next 2 membrane-spanning stretches (helical) occupy residues 38-58 and 68-88; these read IAIM…NYLA and LGPW…LMTM.

It belongs to the CrgA family.

The protein localises to the cell membrane. Its function is as follows. Involved in cell division. This Corynebacterium aurimucosum (strain ATCC 700975 / DSM 44827 / CIP 107346 / CN-1) (Corynebacterium nigricans) protein is Cell division protein CrgA.